A 474-amino-acid polypeptide reads, in one-letter code: ATP synthase subunit beta 1 (474 aa).

Position 157-164 (157-164) interacts with ATP; sequence GGAGVGKT.

It belongs to the ATPase alpha/beta chains family. F-type ATPases have 2 components, CF(1) - the catalytic core - and CF(0) - the membrane proton channel. CF(1) has five subunits: alpha(3), beta(3), gamma(1), delta(1), epsilon(1). CF(0) has three main subunits: a(1), b(2) and c(9-12). The alpha and beta chains form an alternating ring which encloses part of the gamma chain. CF(1) is attached to CF(0) by a central stalk formed by the gamma and epsilon chains, while a peripheral stalk is formed by the delta and b chains.

Its subcellular location is the cell inner membrane. It carries out the reaction ATP + H2O + 4 H(+)(in) = ADP + phosphate + 5 H(+)(out). Its function is as follows. Produces ATP from ADP in the presence of a proton gradient across the membrane. The catalytic sites are hosted primarily by the beta subunits. In Polaromonas naphthalenivorans (strain CJ2), this protein is ATP synthase subunit beta 1.